A 145-amino-acid chain; its full sequence is Ribosome-binding factor A (145 aa).

Residues 122 to 132 show a composition bias toward basic and acidic residues; it reads KVQRDLESAPR. Positions 122-145 are disordered; sequence KVQRDLESAPREDDEGEPDSSSRD.

The protein belongs to the RbfA family. In terms of assembly, monomer. Binds 30S ribosomal subunits, but not 50S ribosomal subunits or 70S ribosomes.

The protein localises to the cytoplasm. One of several proteins that assist in the late maturation steps of the functional core of the 30S ribosomal subunit. Associates with free 30S ribosomal subunits (but not with 30S subunits that are part of 70S ribosomes or polysomes). Required for efficient processing of 16S rRNA. May interact with the 5'-terminal helix region of 16S rRNA. In Methylorubrum extorquens (strain PA1) (Methylobacterium extorquens), this protein is Ribosome-binding factor A.